Consider the following 604-residue polypeptide: MLLKELSSLASPLSQPQVEKLKQLTAELNAVQLAWVSGYLAATANAPGNLAQLAPVSDAQAAQTVTILYGSQTGNGRGIAKALAEKAKAQGYSVNLASMGEYNVRQLKQETLLLLVVSTHGEGEAPDDAIELHKFLASKRAPQLSNLHYSVLALGDSSYEFFCQTGKDFDARLSALGAKALLPLVECDVDYEAAAGQWHADVLTAVKPLIQTTANVVALNDTSSALAASESEFTKQNPYSAEVLVSQKITGRGSDRDVRHVEIDLGESGLCYEVGDALGVWFSNNETLVDEILAGLGLAADTKVTVGNESISLKQALLEKKELTQLYPGLVKAWAELSASPELLALSGDKEQVRQFILHHQFADLVANYQLKADANLDANKLVELLRPLTPRLYSIASSQSEVDTEVHLTVALVEDEHQGQARFGGASHFLASAEEGAEVKVYVEPNKHFRLPEDPQTPVIMIGPGTGVAPFRAFMQERVAQGAEGDSWLFFGNPHFEQDFLYQTEWQQYLKNGDLTRIDVAFSRDQAHKIYVQHRIKEQGQTLWQWLQNGAHLYICGDAERMAKDVHQALLAIAVEFGGLSSEAAEEYFETLRSHKRYQKDVY.

A Flavodoxin-like domain is found at 65-203 (VTILYGSQTG…AAGQWHADVL (139 aa)). Residues 71–76 (SQTGNG), 118–121 (STHG), and 154–163 (LGDSSYEFFC) each bind FMN. Residues 236–453 (QNPYSAEVLV…VEPNKHFRLP (218 aa)) form the FAD-binding FR-type domain. FAD is bound by residues threonine 324, leucine 358, 392–395 (RLYS), 410–412 (TVA), and 425–428 (GGAS). NADP(+) contacts are provided by residues 524–525 (SR), 530–534 (KIYVQ), and aspartate 566. Tyrosine 604 provides a ligand contact to FAD.

It belongs to the NADPH-dependent sulphite reductase flavoprotein subunit CysJ family. The protein in the N-terminal section; belongs to the flavodoxin family. This sequence in the C-terminal section; belongs to the flavoprotein pyridine nucleotide cytochrome reductase family. Alpha(8)-beta(8). The alpha component is a flavoprotein, the beta component is a hemoprotein. The cofactor is FAD. Requires FMN as cofactor.

The catalysed reaction is hydrogen sulfide + 3 NADP(+) + 3 H2O = sulfite + 3 NADPH + 4 H(+). Its pathway is sulfur metabolism; hydrogen sulfide biosynthesis; hydrogen sulfide from sulfite (NADPH route): step 1/1. Its function is as follows. Component of the sulfite reductase complex that catalyzes the 6-electron reduction of sulfite to sulfide. This is one of several activities required for the biosynthesis of L-cysteine from sulfate. The flavoprotein component catalyzes the electron flow from NADPH -&gt; FAD -&gt; FMN to the hemoprotein component. This Shewanella sp. (strain MR-7) protein is Sulfite reductase [NADPH] flavoprotein alpha-component.